Here is a 250-residue protein sequence, read N- to C-terminus: DNA repair protein RecO (250 aa).

It belongs to the RecO family.

Involved in DNA repair and RecF pathway recombination. In Rhodopseudomonas palustris (strain ATCC BAA-98 / CGA009), this protein is DNA repair protein RecO.